We begin with the raw amino-acid sequence, 333 residues long: C4-dicarboxylate-binding periplasmic protein DctP (333 aa).

Positions 1–26 are cleaved as a signal peptide; it reads MLTRRILGALVGATALSLALSVPALA.

It belongs to the bacterial solute-binding protein 7 family. In terms of assembly, the complex comprises the extracytoplasmic solute receptor protein DctP, and the two transmembrane proteins DctQ and DctM.

Its subcellular location is the periplasm. In terms of biological role, part of the tripartite ATP-independent periplasmic (TRAP) transport system DctPQM involved in C4-dicarboxylates uptake. Binds C4-dicarboxylates such as fumarate, succinate, L-malate and D-malate. The sequence is that of C4-dicarboxylate-binding periplasmic protein DctP from Rhodobacter capsulatus (Rhodopseudomonas capsulata).